The chain runs to 206 residues: Methylthioribulose-1-phosphate dehydratase (206 aa).

Zn(2+) is bound by residues His-96 and His-98.

This sequence belongs to the aldolase class II family. MtnB subfamily. The cofactor is Zn(2+).

It carries out the reaction 5-(methylsulfanyl)-D-ribulose 1-phosphate = 5-methylsulfanyl-2,3-dioxopentyl phosphate + H2O. The protein operates within amino-acid biosynthesis; L-methionine biosynthesis via salvage pathway; L-methionine from S-methyl-5-thio-alpha-D-ribose 1-phosphate: step 2/6. In terms of biological role, catalyzes the dehydration of methylthioribulose-1-phosphate (MTRu-1-P) into 2,3-diketo-5-methylthiopentyl-1-phosphate (DK-MTP-1-P). This is Methylthioribulose-1-phosphate dehydratase from Exiguobacterium sibiricum (strain DSM 17290 / CCUG 55495 / CIP 109462 / JCM 13490 / 255-15).